The following is a 215-amino-acid chain: Probable transaldolase (215 aa).

The active-site Schiff-base intermediate with substrate is the Lys83.

This sequence belongs to the transaldolase family. Type 3B subfamily.

The protein localises to the cytoplasm. It catalyses the reaction D-sedoheptulose 7-phosphate + D-glyceraldehyde 3-phosphate = D-erythrose 4-phosphate + beta-D-fructose 6-phosphate. Its pathway is carbohydrate degradation; pentose phosphate pathway; D-glyceraldehyde 3-phosphate and beta-D-fructose 6-phosphate from D-ribose 5-phosphate and D-xylulose 5-phosphate (non-oxidative stage): step 2/3. Its function is as follows. Transaldolase is important for the balance of metabolites in the pentose-phosphate pathway. In Heliobacterium modesticaldum (strain ATCC 51547 / Ice1), this protein is Probable transaldolase.